Here is a 371-residue protein sequence, read N- to C-terminus: Thyroid transcription factor 1 (371 aa).

Positions 161 to 220 (RRKRRVLFSQAQVYELERRFKQQKYLSAPEREHLASMIHLTPTQVKIWFQNHRYKMKRQA) form a DNA-binding region, homeobox. 2 disordered regions span residues 219 to 294 (QAKD…QQQA) and 308 to 342 (SGGPGLGAHPGHQPGSAGQSPDLAHHAASPAALQG). The span at 233-243 (SGGGGGGGGAG) shows a compositional bias: gly residues. 2 stretches are compositionally biased toward low complexity: residues 244 to 253 (CPQQQQAQQQ) and 272 to 294 (AGAPAPGAGSLQGHAQQQAQQQA).

Belongs to the NK-2 homeobox family. In terms of processing, phosphorylated on serine residues. Thyroid, lung and CNS.

Its subcellular location is the nucleus. Its function is as follows. Transcription factor that binds and activates the promoter of thyroid specific genes such as thyroglobulin, thyroperoxidase, and thyrotropin receptor. Crucial in the maintenance of the thyroid differentiation phenotype. May play a role in lung development and surfactant homeostasis. This is Thyroid transcription factor 1 (TITF1) from Canis lupus familiaris (Dog).